Reading from the N-terminus, the 2472-residue chain is Nuclear receptor corepressor 2 (2472 aa).

Disordered regions lie at residues 1–20 (MSGS…PRYP), 47–168 (RDYT…SRLS), and 190–220 (ISKL…PPIE). Residue arginine 18 is modified to Asymmetric dimethylarginine. Positions 51–60 (SHLSPGSIIQ) are enriched in polar residues. A phosphoserine mark is found at serine 54 and serine 67. Basic and acidic residues-rich tracts occupy residues 78 to 88 (RSQELHLRPES) and 96 to 112 (GKPD…RLEL). Serine 149 and serine 152 each carry phosphoserine. The stretch at 165-207 (SRLSKEELIQNMDRVDREITMVEQQISKLKKKQQQLEEEAAKP) forms a coiled coil. Over residues 203-212 (EAAKPPEPEK) the composition is skewed to basic and acidic residues. Serine 215 carries the post-translational modification Phosphoserine. The segment at 254 to 312 (LPLYNQPSDTRQYHENIKINQAMRKKLILYFKRRNHARKQWEQRFCQRYDQLMEAWEKK) is interaction with SIN3A/B. The deacetylase activation domain (DAD) stretch occupies residues 389 to 480 (MRQLAVIPPM…YLTKKNENYK (92 aa)). The region spanning 427–478 (QVTNMWSEQERDTFREKFMQHPKNFGLIASFLERKTVAECVLYYYLTKKNEN) is the SANT 1 domain. Residues lysine 449, tyrosine 470, and tyrosine 471 each contribute to the 1D-myo-inositol 1,4,5,6-tetrakisphosphate site. Disordered stretches follow at residues 487–618 (YRRR…EMET), 665–1107 (HKLK…RPPI), and 1173–1197 (SATS…YRGS). A coiled-coil region spans residues 492–560 (KSQQQQQQQQ…GEDNDEKEAV (69 aa)). Residue serine 493 is modified to Phosphoserine. Over residues 494–507 (QQQQQQQQQQQQQQ) the composition is skewed to low complexity. The span at 512 to 548 (SQEEKEEKEKEKEADKEEEKQDAENEKEELSKEKTDD) shows a compositional bias: basic and acidic residues. Threonine 549 is modified (phosphothreonine). Position 550 is a phosphoserine (serine 550). Polar residues predominate over residues 592–609 (ATPQQSSELASMEMNESS). Residues 606–657 (NESSRWTEEEMETAKKGLLEHGRNWSAIARMVGSKTVSQCKNFYFNYKKRQN) form the SANT 2 domain. A coiled-coil region spans residues 658-682 (LDEILQQHKLKMEKERNARRKKKKT). The span at 709–718 (NEEELAEEAE) shows a compositional bias: acidic residues. Positions 739-750 (VNNSSDTESVPS) are enriched in polar residues. Phosphoserine is present on residues serine 747 and serine 750. 2 stretches are compositionally biased toward pro residues: residues 773-782 (TQPPVPPPEE) and 789-811 (EPSP…PAAP). Basic and acidic residues-rich tracts occupy residues 831–850 (EDAK…KPEE) and 859–868 (ESVKSDHKEE). An N6-acetyllysine modification is found at lysine 878. Positions 905-919 (GSSSGATQDSDSSAT) are enriched in low complexity. Serine 938 bears the Phosphoserine mark. Residue threonine 945 is modified to Phosphothreonine. Phosphoserine is present on serine 955. Lysine 958 carries the post-translational modification N6-acetyllysine. Residues 978–988 (KVHEPPREDTV) show a composition bias toward basic and acidic residues. Over residues 989–1000 (PPKPVPPVPPPT) the composition is skewed to pro residues. The span at 1090–1101 (LPLGLHDSARPV) shows a compositional bias: low complexity. N6-acetyllysine is present on residues lysine 1181 and lysine 1209. Serine 1220 is subject to Phosphoserine. Disordered stretches follow at residues 1254–1277 (SVSQ…AAPK), 1345–1378 (LKRE…LKLK), and 1410–1443 (PLAP…KHDV). Residue threonine 1350 is modified to Phosphothreonine. Basic and acidic residues predominate over residues 1359–1368 (DLTETYKPRP). Residues serine 1449, serine 1509, and serine 1565 each carry the phosphoserine modification. Residues 1479–1578 (KSRSGTSSGA…TVPEHHPHPI (100 aa)) are disordered. An Asymmetric dimethylarginine modification is found at arginine 1624. The segment at 1734–1826 (TAPPPFSSRH…PISPRTQDAL (93 aa)) is disordered. Low complexity predominate over residues 1740-1753 (SSRHSSSPLSPGGP). Residues serine 1746 and serine 1749 each carry the phosphoserine modification. Basic and acidic residues predominate over residues 1765-1778 (SERERERERERDKS). Residues 1807–1826 (RPASHTHQHSPISPRTQDAL) are compositionally biased toward polar residues. Phosphoserine is present on serine 1819. Arginine 1854 is modified (omega-N-methylarginine). Disordered regions lie at residues 1857–1878 (RSTS…THCP), 1898–1986 (KETS…KPFS), and 2001–2078 (AGYS…LQTA). Residues 1899 to 1913 (ETSRVARPERPRVDA) are compositionally biased toward basic and acidic residues. Residue lysine 1920 is modified to N6-acetyllysine. Low complexity predominate over residues 1925-1938 (EPASSPSKSSEPRS). Serine 1963 is subject to Phosphoserine. At lysine 1983 the chain carries N6-acetyllysine. Phosphoserine is present on residues serine 2004, serine 2012, serine 2015, serine 2016, and serine 2018. The residue at position 2020 (threonine 2020) is a Phosphothreonine. Over residues 2020–2043 (THDKGLSKPLEELEKSHLEGELRH) the composition is skewed to basic and acidic residues. The residue at position 2035 (serine 2035) is a Phosphoserine. Residues 2064–2075 (LPESQPSSSPLL) show a composition bias toward low complexity. Positions 2086–2090 (RVVTL) are required for interaction with RARA in the absence of its ligand. A CORNR box of ID1 motif is present at residues 2094–2098 (ISEVI). The disordered stretch occupies residues 2132-2226 (RRPPSDLYLP…GNTSQPPAFF (95 aa)). 3 positions are modified to phosphoserine: serine 2161, serine 2181, and serine 2215. The short motif at 2296–2300 (LEAII) is the CORNR box of ID2 element. The interval 2343 to 2459 (GRSDHALTSP…HHAWDEEPKP (117 aa)) is disordered. Serine 2371 is modified (phosphoserine). Low complexity predominate over residues 2439 to 2450 (LAAGSGPLAGPH).

It belongs to the N-CoR nuclear receptor corepressors family. As to quaternary structure, forms a large corepressor complex that contains SIN3A/B and histone deacetylases HDAC1 and HDAC2. This complex associates with the thyroid (TR) and the retinoid acid receptors (RAR) in the absence of ligand, and may stabilize their interaction with TFIIB. Interacts directly with RARA in the absence of ligand; the interaction represses RARA activity. Interacts (isoform SMRT) with HDAC10. Interacts with MINT. Component of the N-Cor repressor complex, at least composed of NCOR1, NCOR2, HDAC3, TBL1X, TBL1R, CORO2A and GPS2. Interacts with CBFA2T3 and ATXN1L. Interacts with RARB; the interaction is weak and does not repress RARB transactivational activity. Interacts (via 1D-myo-inositol 1,4,5,6-tetrakisphosphate) with HDAC3; promoting the histone deacetylase activity of HDAC3. Interacts with HDAC7 and C1D. Interacts with NR4A2; this interaction increases in the absence of PITX3. Interacts with BCL6 (via the BTB domain), required for BCL6 transcriptional repressor activity on a subset of target genes. Forms ternary complexes with BCOR and BCL6 on target gene promoters but, on enhancer elements, interacts with BCL6 and HDAC3 to repress proximal gene expression. May interact with DEAF1. Interacts with RXRA. Interacts with MECP2. Interacts with ZBTB7A. Interacts with AR. Interacts with TBL1Y. Interacts with SANBR (via the BTB domain). As to expression, ubiquitous. Also widely expressed in early embryos.

It is found in the nucleus. Its function is as follows. Transcriptional corepressor that mediates the transcriptional repression activity of some nuclear receptors by promoting chromatin condensation, thus preventing access of the basal transcription. Acts by recruiting chromatin modifiers, such as histone deacetylases HDAC1, HDAC2 and HDAC3. Required to activate the histone deacetylase activity of HDAC3. Involved in the regulation BCL6-dependent of the germinal center (GC) reactions, mainly through the control of the GC B-cells proliferation and survival. Recruited by ZBTB7A to the androgen response elements/ARE on target genes, negatively regulates androgen receptor signaling and androgen-induced cell proliferation. This Mus musculus (Mouse) protein is Nuclear receptor corepressor 2 (Ncor2).